Here is a 750-residue protein sequence, read N- to C-terminus: Nibrin (750 aa).

The region spanning 24-83 (YIVGRKNCAILIENDQSISRNHAVLRVNFPVTSLSQTDEIPTLTIKDNSKYGTFINEEKM) is the FHA domain. 2 BRCT domains span residues 105–181 (KFRV…SEFL) and 224–315 (GKTF…LAVI). A mediates interaction with SP100 region spans residues 111 to 328 (EPLVVCSSCL…TESYCNPQGQ (218 aa)). The segment at 221–403 (IFKGKTFVFL…SRKLLQGTCN (183 aa)) is interaction with MTOR, MAPKAP1 and RICTOR. A Phosphothreonine modification is found at Thr337. Position 343 is a phosphoserine; by ATM (Ser343). Ser347 and Ser433 each carry phosphoserine. Disordered stretches follow at residues 429–479 (NYQL…SSCK) and 494–550 (QPAG…RKRK). Lys436 is covalently cross-linked (Glycyl lysine isopeptide (Lys-Gly) (interchain with G-Cter in ubiquitin)). The segment covering 446–457 (WSSQQQLNSIKN) has biased composition (polar residues). The short motif at 461 to 467 (PCSRKRE) is the Nuclear localization signal element. The segment covering 502 to 514 (KSKDHESQSETLD) has biased composition (basic and acidic residues). Phosphoserine is present on residues Ser508 and Ser517. A Glycyl lysine isopeptide (Lys-Gly) (interchain with G-Cter in SUMO2) cross-link involves residue Lys528. Residues 540–550 (STEDLRARKRK) show a composition bias toward basic and acidic residues. Residues Lys569 and Lys580 each participate in a glycyl lysine isopeptide (Lys-Gly) (interchain with G-Cter in SUMO2) cross-link. The span at 581-599 (QEADVSIRKKPRMDAERNQ) shows a compositional bias: basic and acidic residues. The segment at 581-622 (QEADVSIRKKPRMDAERNQHLNGGPVPESNSALQEDETGKKD) is disordered. Residues Lys683, Lys687, and Lys732 each participate in a glycyl lysine isopeptide (Lys-Gly) (interchain with G-Cter in ubiquitin) cross-link. A FxF/Y motif motif is present at residues 737–746 (ADDLFRYNPN).

It belongs to the Nibrin family. Component of the MRN complex composed of two heterodimers RAD50 and MRE11 associated with a single NBN. The MRN complexes dimerize on DNA to form joined MRN-MRN oligomers required for DNA double-strand break repair. The MRN complexes dimerize on DNA to form joined MRN-MRN oligomers required for DNA double-strand break repair. As part of the MRN complex, interacts with MCM9; the interaction recruits the complex to DNA repair sites. Component of the BASC complex, at least composed of BRCA1, MSH2, MSH6, MLH1, ATM, BLM, RAD50, MRE11 and NBN. Interacts with histone H2AX; this requires phosphorylation of H2AX on 'Ser-139' and promotes NBN recruitment to DNA damage sites. Interacts with (phosphorylated) MDC1; promoting NBN recruitment to DNA damage sites. Interacts with (phosphorylated) RAD17; promoting NBN recruitment to DNA damage sites. Interacts (via FxF/Y motif) with ATM. Interacts with HJURP. Interacts with INTS3. Interacts with KPNA2. Interacts with TERF2; interaction is disrupted upon NBN phosphorylation by CDK2. Interacts with (phosphorylated) RBBP8/CtIP; the interaction links the role of the MRN complex in DNA double-strand break sensing to resection. Interacts with SP100; recruits NBN to PML bodies. Interacts with ATF2. Interacts with MTOR, MAPKAP1 isoform 2 and RICTOR; indicative for an association with the mTORC2 complex. Interacts with MRNIP. Interacts with UFL1; promoting UFL1 recruitment to double-strand breaks following DNA damage. Interacts with CYREN (via XLF motif). Post-translationally, phosphorylated by ATM in response of ionizing radiation, and such phosphorylation is responsible intra-S phase checkpoint control and telomere maintenance. Phosphorylated at Ser-433 by CDK2 in S/G2 phases abolishes interaction with TERF2, enabling DCLRE1B/Apollo recruitment to telomeres. Phosphorylation at Ser-433 in response to dysfunctional telomeres promotes non-homologous end joining repair at telomeres, while dephosphorylation by PPP1CA promotes microhomology-mediated end-joining (MMEJ) repair. In terms of processing, ubiquitinated at Lys-436 via 'Lys-6'-linked ubiquitin chains by RNF8, promoting NBN recruitment to DNA double-strand breaks (DSBs). Ubiquitinated at Lys-687 via 'Lys-63'-linked ubiquitin chains by PELI1: ubiquitination takes place following PELI1 phosphorylation and promotes ATM activation and DNA repair. Ubiquitinated at Lys-732 via 'Lys-63'-linked ubiquitin chains by the SCF(SKP2) complex: ubiquitination takes place following SKP2 phosphorylation and promotes ATM activation and DNA repair. In terms of tissue distribution, present at approximately equal levels in the heart at fetal day 17, at relatively constant levels at postnatal days 10, 17 and 21 and at slightly lower levels in the adult heart. Barely detectable in the brain. Not detected in kidney, very low levels in liver and skeletal muscle and moderate levels in heart, lung and brain (at protein level).

It is found in the nucleus. Its subcellular location is the chromosome. The protein localises to the PML body. The protein resides in the telomere. In terms of biological role, component of the MRN complex, which plays a central role in double-strand break (DSB) repair, DNA recombination, maintenance of telomere integrity and meiosis. The MRN complex is involved in the repair of DNA double-strand breaks (DSBs) via homologous recombination (HR), an error-free mechanism which primarily occurs during S and G2 phases. The complex (1) mediates the end resection of damaged DNA, which generates proper single-stranded DNA, a key initial steps in HR, and is (2) required for the recruitment of other repair factors and efficient activation of ATM and ATR upon DNA damage. The MRN complex possesses single-strand endonuclease activity and double-strand-specific 3'-5' exonuclease activity, which are provided by MRE11, to initiate end resection, which is required for single-strand invasion and recombination. Within the MRN complex, NBN acts as a protein-protein adapter, which specifically recognizes and binds phosphorylated proteins, promoting their recruitment to DNA damage sites. Recruits MRE11 and RAD50 components of the MRN complex to DSBs in response to DNA damage. Promotes the recruitment of PI3/PI4-kinase family members ATM, ATR, and probably DNA-PKcs to the DNA damage sites, activating their functions. Mediates the recruitment of phosphorylated RBBP8/CtIP to DSBs, leading to cooperation between the MRN complex and RBBP8/CtIP to initiate end resection. RBBP8/CtIP specifically promotes the endonuclease activity of the MRN complex to clear DNA ends containing protein adducts. The MRN complex is also required for the processing of R-loops. NBN also functions in telomere length maintenance via its interaction with TERF2: interaction with TERF2 during G1 phase preventing recruitment of DCLRE1B/Apollo to telomeres. NBN also promotes DNA repair choice at dysfunctional telomeres: NBN phosphorylation by CK2 promotes non-homologous end joining repair at telomeres, while unphosphorylated NBN promotes microhomology-mediated end-joining (MMEJ) repair. Enhances AKT1 phosphorylation possibly by association with the mTORC2 complex. In Rattus norvegicus (Rat), this protein is Nibrin (Nbn).